The following is a 169-amino-acid chain: Ribosome maturation factor RimM (169 aa).

One can recognise a PRC barrel domain in the interval 92 to 166 (NKEYYWNDIF…IVIDLTNLNN (75 aa)).

Belongs to the RimM family. In terms of assembly, binds ribosomal protein uS19.

The protein localises to the cytoplasm. Functionally, an accessory protein needed during the final step in the assembly of 30S ribosomal subunit, possibly for assembly of the head region. Essential for efficient processing of 16S rRNA. May be needed both before and after RbfA during the maturation of 16S rRNA. It has affinity for free ribosomal 30S subunits but not for 70S ribosomes. This Buchnera aphidicola subsp. Cinara cedri (strain Cc) protein is Ribosome maturation factor RimM.